A 281-amino-acid chain; its full sequence is Bidirectional sugar transporter SWEET14 (281 aa).

At 1–6 (MVLTHN) the chain is on the extracellular side. Residues 7-27 (VLAVTFGVLGNIISFIVFLAP) traverse the membrane as a helical segment. In terms of domain architecture, MtN3/slv 1 spans 11–97 (TFGVLGNIIS…ILFITYANKK (87 aa)). The Cytoplasmic portion of the chain corresponds to 28 to 42 (VPTFVRICKKKSIEG). The chain crosses the membrane as a helical span at residues 43 to 63 (FESLPYVSALFSAMLWIYYAL). Over 64–70 (QKDGAGF) the chain is Extracellular. Residues 71–91 (LLITINAVGCFIETIYIILFI) form a helical membrane-spanning segment. Residues 92–104 (TYANKKARISTLK) are Cytoplasmic-facing. Residues 105–125 (VLGLLNFLGFAAIILVCELLT) form a helical membrane-spanning segment. Over 126-132 (KGSNREK) the chain is Extracellular. A helical transmembrane segment spans residues 133–153 (VLGGICVGFSVCVFAAPLSIM). In terms of domain architecture, MtN3/slv 2 spans 133–216 (VLGGICVGFS…MILYVIFKYY (84 aa)). At 154–166 (RVVIRTKSVEFMP) the chain is on the cytoplasmic side. A helical membrane pass occupies residues 167–187 (FSLSLFLTISAITWLFYGLAI). The Extracellular segment spans residues 188 to 192 (KDFYV). Residues 193–213 (ALPNILGAFLGAVQMILYVIF) form a helical membrane-spanning segment. At 214-281 (KYYKTPLVVD…EDQMDKKMPN (68 aa)) the chain is on the cytoplasmic side. A compositionally biased stretch (polar residues) spans 244–259 (TPASGDLTVQPQTNPD). The segment at 244–281 (TPASGDLTVQPQTNPDVSHPIKTHGGDLEDQMDKKMPN) is disordered. Over residues 267 to 281 (HGGDLEDQMDKKMPN) the composition is skewed to basic and acidic residues.

It belongs to the SWEET sugar transporter family. Forms homooligomers and/or heterooligomers.

It is found in the cell membrane. Functionally, mediates both low-affinity uptake and efflux of sugar across the plasma membrane. The sequence is that of Bidirectional sugar transporter SWEET14 from Arabidopsis thaliana (Mouse-ear cress).